Consider the following 67-residue polypeptide: uncharacterized protein (67 aa).

This is an uncharacterized protein from Haloarcula hispanica (His1V).